Consider the following 343-residue polypeptide: GTPase Obg (343 aa).

The Obg domain maps to 1 to 159 (MKFIDEVKIQ…FELRLELRVL (159 aa)). Positions 160 to 334 (ADVGLLGLPN…LIYAIMGHLQ (175 aa)) constitute an OBG-type G domain. GTP-binding positions include 166 to 173 (GLPNAGKS), 191 to 195 (FTTLY), 213 to 216 (DIPG), 284 to 287 (NKVD), and 315 to 317 (SAL). Mg(2+)-binding residues include Ser173 and Thr193.

The protein belongs to the TRAFAC class OBG-HflX-like GTPase superfamily. OBG GTPase family. Monomer. Mg(2+) serves as cofactor.

Its subcellular location is the cytoplasm. In terms of biological role, an essential GTPase which binds GTP, GDP and possibly (p)ppGpp with moderate affinity, with high nucleotide exchange rates and a fairly low GTP hydrolysis rate. Plays a role in control of the cell cycle, stress response, ribosome biogenesis and in those bacteria that undergo differentiation, in morphogenesis control. The protein is GTPase Obg of Nitrosomonas europaea (strain ATCC 19718 / CIP 103999 / KCTC 2705 / NBRC 14298).